The primary structure comprises 287 residues: uncharacterized protein (287 aa).

The first 20 residues, 1–20 (MKVICGSVFLFSLFFQVVLG), serve as a signal peptide directing secretion. Residues 22-201 (YFSSSSGNPN…AFYGPRRNIK (180 aa)) are Extracellular-facing. N-linked (GlcNAc...) asparagine glycosylation is found at Asn120, Asn154, and Asn166. The helical transmembrane segment at 202 to 222 (AAIAVPSVILGLILVALVYYA) threads the bilayer. Topologically, residues 223–287 (YRKDTWKIYM…YYQSQVKKFH (65 aa)) are cytoplasmic.

The protein localises to the membrane. This is an uncharacterized protein from Schizosaccharomyces pombe (strain 972 / ATCC 24843) (Fission yeast).